The primary structure comprises 64 residues: Prokaryotic ubiquitin-like protein Pup (64 aa).

The disordered stretch occupies residues methionine 1–aspartate 37. Residues glycine 21–tyrosine 58 form an ARC ATPase binding region. Residues alanine 24–glutamate 52 adopt a coiled-coil conformation. Deamidated glutamine is present on glutamine 64. Residue glutamine 64 forms an Isoglutamyl lysine isopeptide (Gln-Lys) (interchain with K-? in acceptor proteins) linkage.

The protein belongs to the prokaryotic ubiquitin-like protein family. In terms of assembly, strongly interacts with the proteasome-associated ATPase ARC through a hydrophobic interface; the interacting region of Pup lies in its C-terminal half. There is one Pup binding site per ARC hexamer ring. Is modified by deamidation of its C-terminal glutamine to glutamate by the deamidase Dop, a prerequisite to the subsequent pupylation process.

It participates in protein degradation; proteasomal Pup-dependent pathway. In terms of biological role, protein modifier that is covalently attached to lysine residues of substrate proteins, thereby targeting them for proteasomal degradation. The tagging system is termed pupylation. The sequence is that of Prokaryotic ubiquitin-like protein Pup from Mycobacterium sp. (strain JLS).